Here is a 269-residue protein sequence, read N- to C-terminus: Glutamate racemase (269 aa).

Substrate-binding positions include 7 to 8 and 39 to 40; these read DS and YG. C70 functions as the Proton donor/acceptor in the catalytic mechanism. 71–72 contacts substrate; the sequence is NT. The Proton donor/acceptor role is filled by C194. Substrate is bound at residue 195–196; that stretch reads TH.

This sequence belongs to the aspartate/glutamate racemases family.

The catalysed reaction is L-glutamate = D-glutamate. Its pathway is cell wall biogenesis; peptidoglycan biosynthesis. In terms of biological role, provides the (R)-glutamate required for cell wall biosynthesis. The chain is Glutamate racemase from Ruegeria pomeroyi (strain ATCC 700808 / DSM 15171 / DSS-3) (Silicibacter pomeroyi).